A 390-amino-acid chain; its full sequence is Bifunctional enzyme IspD/IspF (390 aa).

The tract at residues Met1 to Ile229 is 2-C-methyl-D-erythritol 4-phosphate cytidylyltransferase. The tract at residues Arg230 to Glu390 is 2-C-methyl-D-erythritol 2,4-cyclodiphosphate synthase. The a divalent metal cation site is built by Asp236 and His238. Residues Asp236–His238 and His262–Ser263 contribute to the 4-CDP-2-C-methyl-D-erythritol 2-phosphate site. Residue His270 coordinates a divalent metal cation. 4-CDP-2-C-methyl-D-erythritol 2-phosphate is bound by residues Asp284–Gly286, Thr360–Glu363, Phe367, and Arg370.

This sequence in the N-terminal section; belongs to the IspD/TarI cytidylyltransferase family. IspD subfamily. It in the C-terminal section; belongs to the IspF family. It depends on a divalent metal cation as a cofactor.

It carries out the reaction 2-C-methyl-D-erythritol 4-phosphate + CTP + H(+) = 4-CDP-2-C-methyl-D-erythritol + diphosphate. The catalysed reaction is 4-CDP-2-C-methyl-D-erythritol 2-phosphate = 2-C-methyl-D-erythritol 2,4-cyclic diphosphate + CMP. It participates in isoprenoid biosynthesis; isopentenyl diphosphate biosynthesis via DXP pathway; isopentenyl diphosphate from 1-deoxy-D-xylulose 5-phosphate: step 2/6. Its pathway is isoprenoid biosynthesis; isopentenyl diphosphate biosynthesis via DXP pathway; isopentenyl diphosphate from 1-deoxy-D-xylulose 5-phosphate: step 4/6. Bifunctional enzyme that catalyzes the formation of 4-diphosphocytidyl-2-C-methyl-D-erythritol from CTP and 2-C-methyl-D-erythritol 4-phosphate (MEP) (IspD), and catalyzes the conversion of 4-diphosphocytidyl-2-C-methyl-D-erythritol 2-phosphate (CDP-ME2P) to 2-C-methyl-D-erythritol 2,4-cyclodiphosphate (ME-CPP) with a corresponding release of cytidine 5-monophosphate (CMP) (IspF). The sequence is that of Bifunctional enzyme IspD/IspF from Brucella abortus biovar 1 (strain 9-941).